The sequence spans 238 residues: 3-dehydroquinate dehydratase (238 aa).

3-dehydroquinate-binding positions include 35–37 (ELR) and R70. The active-site Proton donor/acceptor is the H133. K160 functions as the Schiff-base intermediate with substrate in the catalytic mechanism. 3-dehydroquinate-binding residues include R202 and Q225.

The protein belongs to the type-I 3-dehydroquinase family. As to quaternary structure, homodimer.

It carries out the reaction 3-dehydroquinate = 3-dehydroshikimate + H2O. The protein operates within metabolic intermediate biosynthesis; chorismate biosynthesis; chorismate from D-erythrose 4-phosphate and phosphoenolpyruvate: step 3/7. In terms of biological role, involved in the third step of the chorismate pathway, which leads to the biosynthesis of aromatic amino acids. Catalyzes the cis-dehydration of 3-dehydroquinate (DHQ) and introduces the first double bond of the aromatic ring to yield 3-dehydroshikimate. This chain is 3-dehydroquinate dehydratase, found in Staphylococcus aureus (strain USA300).